A 216-amino-acid chain; its full sequence is Protein InaA (216 aa).

The protein belongs to the protein kinase superfamily. KdkA/RfaP family.

May be an environmental sensor responsive to several stimuli, including internal pH, proton motive force, temperature, and possibly other unknown factors. This chain is Protein InaA (inaA), found in Escherichia coli (strain K12).